A 1226-amino-acid polypeptide reads, in one-letter code: MGYPPPTRRLGDKKRYHYSNNPNRRHPSAVYSKNSFPKSSNNGFVSSPTADNSTNPSVTPSTASVPLPTAAPGSTFGIEAPRPSRYDPSSVSRPSSSSYSSTRKIGSRYNPDVERSSSTTSSTPESMNTSTITHTNTDIGNSRYSRKTMSRYNPQSTSSTNVTHFPSALSNAPPFYVANGSSRRPRSMDDYSPDVTNKLETNNVSSVNNNSPHSYYSRSNKWRSIGTPSRPPFDNHVGNMTTTSNTNSIHQREPFWKANSTTILKSTHSQSSPSLHTKKFHDANKLDKPEASVKVETPSKDETKAISYHDNNFPPRKSVSKPNAPLEPDNIKVGEEDALGKKEVHKSGREIAKEHPTPVKMKEHDELEARAKKVSKINIDGKQDEIWTTAKTVASAVEVSKESQKELTRSVERKESPEIRDYERAYDPKALKTDVTKLTVDNDNKSYEEPLEKVEGCIFPLPKAETRLWELKNQKRNKIISEQKYLLKKAIRNFSEYPFYAQNKLIHQQATGLILTKIISKIKKEEHLKKINLKHDYFDLQKKYEKECEILTKLSENLRKEEIENKRKEHELMEQKRREEGIETEKEKSLRHPSSSSSSRRRNRADFVDDAEMENVLLQIDPNYKHYQAAATIPPLILDPIRKHSYKFCDVNNLVTDKKLWASRILKDASDNFTDHEHSLFLEGYLIHPKKFGKISHYMGGLRSPEECVLHYYRTKKTVNYKQLLIDKNKKRKMSAAAKRRKRKERSNDEEVEVDESKEESTNTIEKEEKSENNAEENVQPVLVQGSEVKGDPLGTPEKVENMIEQRGEEFAGELENAERVNDLKRAHDEVGEESNKSSVIETNNGVQIMDPKGAVQNGYYPEETKELDFSLENALQRKKHKSAPEHKTSYWSVRESQLFPELLKEFGSQWSLISEKLGTKSTTMVRNYYQRNAARNGWKLLVDETDLKRDGTSSESVQQSQILIQPERPNINAYSNIPPQQRPALGYFVGQPTHGHNTSISSIDGSIRPFGPDFHRDTFSKISAPLTTLPPPRLPSIQFPRSEMAEPTVTDLRNRPLDHIDTLADAASSVTNNQNFSNERNAIDIGRKSTTISNLLNNSDRSMKSSFQSASRHEAQLEDTPSMNNIVVQEIKPNITTPRSSSISALLNPVNGNGQSNPDGRPLLPFQHAISQGTPTFPLPAPRTSPISRAPPKFNFSNDPLAALAAVASAPDAMSSFLSKKENNN.

Disordered stretches follow at residues 1 to 219 (MGYP…YSRS) and 264 to 331 (LKST…PDNI). The span at 11-27 (GDKKRYHYSNNPNRRHP) shows a compositional bias: basic residues. Residues 31-64 (YSKNSFPKSSNNGFVSSPTADNSTNPSVTPSTAS) are compositionally biased toward polar residues. Low complexity-rich tracts occupy residues 81–103 (PRPS…SSTR) and 116–131 (SSST…NTST). 2 stretches are compositionally biased toward polar residues: residues 132–143 (ITHTNTDIGNSR) and 150–170 (SRYN…SALS). Ser-187 is modified (phosphoserine). Residues 202–211 (NNVSSVNNNS) are compositionally biased toward low complexity. Residues 264–275 (LKSTHSQSSPSL) show a composition bias toward polar residues. Over residues 280 to 304 (FHDANKLDKPEASVKVETPSKDETK) the composition is skewed to basic and acidic residues. A Phosphoserine modification is found at Ser-395. A coiled-coil region spans residues 539-591 (DLQKKYEKECEILTKLSENLRKEEIENKRKEHELMEQKRREEGIETEKEKSLR). Basic and acidic residues predominate over residues 569-590 (EHELMEQKRREEGIETEKEKSL). Residues 569–605 (EHELMEQKRREEGIETEKEKSLRHPSSSSSSRRRNRA) are disordered. The region spanning 668-720 (DASDNFTDHEHSLFLEGYLIHPKKFGKISHYMGGLRSPEECVLHYYRTKKTVN) is the SANT domain. Residues 732–745 (RKMSAAAKRRKRKE) are compositionally biased toward basic residues. The tract at residues 732-796 (RKMSAAAKRR…SEVKGDPLGT (65 aa)) is disordered. Positions 748–758 (NDEEVEVDESK) are enriched in acidic residues. Residues 759-773 (EESTNTIEKEEKSEN) show a composition bias toward basic and acidic residues. At Thr-796 the chain carries Phosphothreonine. Residues 884–938 (APEHKTSYWSVRESQLFPELLKEFGSQWSLISEKLGTKSTTMVRNYYQRNAARNG) form the HTH myb-type domain. Positions 911–934 (WSLISEKLGTKSTTMVRNYYQRNA) form a DNA-binding region, H-T-H motif. At Ser-1037 the chain carries Phosphoserine. The segment at 1172–1194 (SQGTPTFPLPAPRTSPISRAPPK) is disordered.

Identified in a Set3C complex with SET3, HST1, HOS2, SIF2, CPR1 and HOS4.

The protein resides in the nucleus. In terms of biological role, part of the Set3C complex, which is required to repress early/middle sporulation genes during meiosis. The chain is Probable DNA-binding protein SNT1 (SNT1) from Saccharomyces cerevisiae (strain ATCC 204508 / S288c) (Baker's yeast).